A 354-amino-acid polypeptide reads, in one-letter code: 3-dehydroquinate synthase (354 aa).

NAD(+)-binding positions include D61 to K66, T119 to T120, K132, K141, and F159 to T162. Residues E174, H238, and H254 each contribute to the Zn(2+) site.

It belongs to the sugar phosphate cyclases superfamily. Dehydroquinate synthase family. NAD(+) is required as a cofactor. The cofactor is Co(2+). Requires Zn(2+) as cofactor.

The protein resides in the cytoplasm. It catalyses the reaction 7-phospho-2-dehydro-3-deoxy-D-arabino-heptonate = 3-dehydroquinate + phosphate. It participates in metabolic intermediate biosynthesis; chorismate biosynthesis; chorismate from D-erythrose 4-phosphate and phosphoenolpyruvate: step 2/7. Its function is as follows. Catalyzes the conversion of 3-deoxy-D-arabino-heptulosonate 7-phosphate (DAHP) to dehydroquinate (DHQ). The chain is 3-dehydroquinate synthase from Saccharolobus solfataricus (strain ATCC 35092 / DSM 1617 / JCM 11322 / P2) (Sulfolobus solfataricus).